Consider the following 512-residue polypeptide: Cytoplasmic tRNA 2-thiolation protein 2-B (512 aa).

A disordered region spans residues 196–215 (VTDSDSPGSSDKMYQSTCSR). The span at 199 to 214 (SDSPGSSDKMYQSTCS) shows a compositional bias: polar residues.

Belongs to the CTU2/NCS2 family.

It is found in the cytoplasm. It participates in tRNA modification; 5-methoxycarbonylmethyl-2-thiouridine-tRNA biosynthesis. Functionally, plays a central role in 2-thiolation of mcm(5)S(2)U at tRNA wobble positions of tRNA(Lys), tRNA(Glu) and tRNA(Gln). May act by forming a heterodimer with ctu1/atpbd3 that ligates sulfur from thiocarboxylated urm1 onto the uridine of tRNAs at wobble position. This is Cytoplasmic tRNA 2-thiolation protein 2-B (ctu2-b) from Xenopus laevis (African clawed frog).